A 225-amino-acid chain; its full sequence is ATP-dependent dethiobiotin synthetase BioD (225 aa).

12 to 17 (EIGKTY) serves as a coordination point for ATP. A Mg(2+)-binding site is contributed by T16. K37 is a catalytic residue. Position 41 (S41) interacts with substrate. ATP is bound by residues D55, 122-125 (EGVG), and 182-183 (SE). 2 residues coordinate Mg(2+): D55 and E122.

This sequence belongs to the dethiobiotin synthetase family. As to quaternary structure, homodimer. It depends on Mg(2+) as a cofactor.

It is found in the cytoplasm. The enzyme catalyses (7R,8S)-7,8-diammoniononanoate + CO2 + ATP = (4R,5S)-dethiobiotin + ADP + phosphate + 3 H(+). Its pathway is cofactor biosynthesis; biotin biosynthesis; biotin from 7,8-diaminononanoate: step 1/2. Functionally, catalyzes a mechanistically unusual reaction, the ATP-dependent insertion of CO2 between the N7 and N8 nitrogen atoms of 7,8-diaminopelargonic acid (DAPA, also called 7,8-diammoniononanoate) to form a ureido ring. This is ATP-dependent dethiobiotin synthetase BioD from Methylobacterium nodulans (strain LMG 21967 / CNCM I-2342 / ORS 2060).